The chain runs to 840 residues: Leucine--tRNA ligase (840 aa).

Positions 44–55 (PYPSANGLHVGH) match the 'HIGH' region motif. The short motif at 617–621 (KMSKS) is the 'KMSKS' region element. Lys620 is an ATP binding site.

Belongs to the class-I aminoacyl-tRNA synthetase family.

Its subcellular location is the cytoplasm. The catalysed reaction is tRNA(Leu) + L-leucine + ATP = L-leucyl-tRNA(Leu) + AMP + diphosphate. This Borreliella burgdorferi (strain ZS7) (Borrelia burgdorferi) protein is Leucine--tRNA ligase.